The chain runs to 149 residues: Probable flagellum biosynthesis repressor protein FlbT (149 aa).

The protein belongs to the FlbT family.

Has a post-transcriptional repressor function in flagellum biogenesis. Associates with the 5'-UTR of fljK mRNA and promotes its degradation. This chain is Probable flagellum biosynthesis repressor protein FlbT, found in Allorhizobium ampelinum (strain ATCC BAA-846 / DSM 112012 / S4) (Agrobacterium vitis (strain S4)).